A 406-amino-acid chain; its full sequence is E3 ubiquitin-protein ligase RING1 (406 aa).

The residue at position 24 (threonine 24) is a Phosphothreonine. Positions methionine 30–aspartate 234 are necessary for transcriptional repression. Position 38 is a phosphoserine (serine 38). An RING-type zinc finger spans residues cysteine 48–arginine 88. Phosphoserine occurs at positions 140, 187, and 190. Disordered stretches follow at residues histidine 151–glutamate 263 and glutamine 309–glutamate 354. Positions glutamate 175–serine 187 are enriched in acidic residues. The short motif at lysine 201–arginine 204 is the Nuclear localization signal element. The segment covering glycine 214–glycine 228 has biased composition (gly residues). Phosphothreonine is present on threonine 215. A phosphoserine mark is found at serine 229 and serine 232. Residues glutamate 230–lysine 406 form a necessary for interaction with CBX2 region. Positions arginine 235–leucine 244 are enriched in gly residues. A compositionally biased stretch (pro residues) spans proline 246–proline 258. A phosphoserine mark is found at serine 248 and serine 254. The segment covering glycine 317–glutamate 343 has biased composition (gly residues).

As to quaternary structure, component of chromatin-associated Polycomb (PcG) complexes. Part of the E2F6.com-1 complex in G0 phase composed of E2F6, MGA, MAX, TFDP1, CBX3, BAT8, EUHMTASE1, RING1, RNF2/RING2 MBLR, L3MBTL2 and YAF2. Interacts with CBX2 and PCGF6. Component of a PRC1-like complex. Component of repressive BCOR complex containing Polycomb group subcomplex at least composed of RYBP, PCGF1, BCOR and RNF2/RING2. Interacts with PHC2, PCGF2, RNF2; CBX6, CBX7 and CBX8. Interacts with BMI1. Interacts with MN1. Interacts with USP26.

It is found in the nucleus speckle. The catalysed reaction is S-ubiquitinyl-[E2 ubiquitin-conjugating enzyme]-L-cysteine + [acceptor protein]-L-lysine = [E2 ubiquitin-conjugating enzyme]-L-cysteine + N(6)-ubiquitinyl-[acceptor protein]-L-lysine.. The protein operates within protein modification; protein ubiquitination. Its function is as follows. Constitutes one of the E3 ubiquitin-protein ligases that mediate monoubiquitination of 'Lys-119' of histone H2A, thereby playing a central role in histone code and gene regulation. H2A 'Lys-119' ubiquitination gives a specific tag for epigenetic transcriptional repression and participates in X chromosome inactivation of female mammals. Essential component of a Polycomb group (PcG) multiprotein PRC1-like complex, a complex class required to maintain the transcriptionally repressive state of many genes, including Hox genes, throughout development. PcG PRC1 complex acts via chromatin remodeling and modification of histones, rendering chromatin heritably changed in its expressibility. Compared to RNF2/RING2, it does not have the main E3 ubiquitin ligase activity on histone H2A, and it may rather act as a modulator of RNF2/RING2 activity. This is E3 ubiquitin-protein ligase RING1 from Mus musculus (Mouse).